The primary structure comprises 225 residues: METCSPPVTFITYALYGIKTSPAWTLPNFEQVICSCDWGYRLIAVGAESKCDVTPQGSFVIQHGASITALVLDCGVEFCSYAFTHAENTRVPLTTEDGSVLVVPFCGWVCVGRDRCLRSMSGGVLTISWDTSQTAYISVAVYRPPTLQCHALDCTRAETTVCSTAAITDASESDPLYADQEGDQTQDQDGGHDFLETILMESDLYGTNGASALLEPCFPCLSNND.

This sequence belongs to the alphaherpesvirinae HHV-1 UL4 family.

It is found in the host nucleus. This Equus caballus (Horse) protein is Nuclear protein UL4 homolog.